Reading from the N-terminus, the 221-residue chain is CASP-like protein 4C1 (221 aa).

Residues 1–21 (MDSPESSDRGLNPMTPDHGGH) are disordered. Over 1-54 (MDSPESSDRGLNPMTPDHGGHNGKVVHYFGQGVEGGPASPRKLGHGHLHPKANT) the chain is Cytoplasmic. Residues 55–75 (ALLLLRLLTFAFSLASLVIMA) form a helical membrane-spanning segment. Over 76–101 (TNSATTTATAGRHRTVNWVDFDTYRY) the chain is Extracellular. The chain crosses the membrane as a helical span at residues 102-122 (VLAACAIVCLYSFAEIGLGLW). Topologically, residues 123–144 (YLLKGRMVMPESMAHWFDFGHD) are cytoplasmic. Residues 145 to 165 (QGFAYLIFSACSGATAVAHNL) form a helical membrane-spanning segment. At 166–189 (RERHILIHGMYGCDEANSFCMKAE) the chain is on the extracellular side. A helical membrane pass occupies residues 190-210 (ISIGLAFGAFLFIALSSLLSG). Residues 211–221 (YRLVKWLILGP) lie on the Cytoplasmic side of the membrane.

The protein belongs to the Casparian strip membrane proteins (CASP) family. As to quaternary structure, homodimer and heterodimers.

The protein localises to the cell membrane. In Pteridium aquilinum subsp. aquilinum (Bracken fern), this protein is CASP-like protein 4C1.